Consider the following 364-residue polypeptide: UDP-N-acetylglucosamine--N-acetylmuramyl-(pentapeptide) pyrophosphoryl-undecaprenol N-acetylglucosamine transferase (364 aa).

UDP-N-acetyl-alpha-D-glucosamine-binding positions include 14 to 16 (TGG), Asn126, Arg163, Ser190, Ile246, 265 to 270 (ALTVSE), and Gln291.

The protein belongs to the glycosyltransferase 28 family. MurG subfamily.

The protein resides in the cell inner membrane. The catalysed reaction is di-trans,octa-cis-undecaprenyl diphospho-N-acetyl-alpha-D-muramoyl-L-alanyl-D-glutamyl-meso-2,6-diaminopimeloyl-D-alanyl-D-alanine + UDP-N-acetyl-alpha-D-glucosamine = di-trans,octa-cis-undecaprenyl diphospho-[N-acetyl-alpha-D-glucosaminyl-(1-&gt;4)]-N-acetyl-alpha-D-muramoyl-L-alanyl-D-glutamyl-meso-2,6-diaminopimeloyl-D-alanyl-D-alanine + UDP + H(+). It participates in cell wall biogenesis; peptidoglycan biosynthesis. Functionally, cell wall formation. Catalyzes the transfer of a GlcNAc subunit on undecaprenyl-pyrophosphoryl-MurNAc-pentapeptide (lipid intermediate I) to form undecaprenyl-pyrophosphoryl-MurNAc-(pentapeptide)GlcNAc (lipid intermediate II). This is UDP-N-acetylglucosamine--N-acetylmuramyl-(pentapeptide) pyrophosphoryl-undecaprenol N-acetylglucosamine transferase from Shewanella loihica (strain ATCC BAA-1088 / PV-4).